We begin with the raw amino-acid sequence, 333 residues long: Flap endonuclease 1 (333 aa).

Residues Met1 to Arg99 form an N-domain region. Mg(2+) is bound by residues Asp28, Asp81, Glu153, Glu155, Asp174, Asp176, and Asp235. The segment at Glu117–Gly256 is I-domain. Residues Gly325–Phe333 form an interaction with PCNA region.

Belongs to the XPG/RAD2 endonuclease family. FEN1 subfamily. As to quaternary structure, interacts with PCNA. PCNA stimulates the nuclease activity without altering cleavage specificity. The cofactor is Mg(2+).

Structure-specific nuclease with 5'-flap endonuclease and 5'-3' exonuclease activities involved in DNA replication and repair. During DNA replication, cleaves the 5'-overhanging flap structure that is generated by displacement synthesis when DNA polymerase encounters the 5'-end of a downstream Okazaki fragment. Binds the unpaired 3'-DNA end and kinks the DNA to facilitate 5' cleavage specificity. Cleaves one nucleotide into the double-stranded DNA from the junction in flap DNA, leaving a nick for ligation. Also involved in the base excision repair (BER) pathway. Acts as a genome stabilization factor that prevents flaps from equilibrating into structures that lead to duplications and deletions. Also possesses 5'-3' exonuclease activity on nicked or gapped double-stranded DNA. This chain is Flap endonuclease 1, found in Methanosphaerula palustris (strain ATCC BAA-1556 / DSM 19958 / E1-9c).